Consider the following 477-residue polypeptide: Cytochrome c-552 (477 aa).

A signal peptide spans 1–26 (MVRISTSISYLWGMVASLFLMMPAYS). Residue His94 coordinates heme c. Heme-binding residues include Cys122, Cys125, and Lys126. Residues Cys160, Cys163, His164, Cys209, Cys212, and His213 each coordinate heme c. The Ca(2+) site is built by Glu215, Tyr216, Lys261, and Gln263. Tyr216 serves as a coordination point for substrate. Residue His264 coordinates substrate. Heme c contacts are provided by His275, Cys282, Cys285, His286, His301, Cys314, Cys317, His318, and His393.

It belongs to the cytochrome c-552 family. Ca(2+) serves as cofactor. Heme c is required as a cofactor.

It is found in the periplasm. It carries out the reaction 6 Fe(III)-[cytochrome c] + NH4(+) + 2 H2O = 6 Fe(II)-[cytochrome c] + nitrite + 8 H(+). It participates in nitrogen metabolism; nitrate reduction (assimilation). Functionally, catalyzes the reduction of nitrite to ammonia, consuming six electrons in the process. This Pectobacterium carotovorum subsp. carotovorum (strain PC1) protein is Cytochrome c-552.